The sequence spans 483 residues: Glutamyl-tRNA(Gln) amidotransferase subunit A (483 aa).

Active-site charge relay system residues include lysine 77 and serine 152. Serine 176 (acyl-ester intermediate) is an active-site residue.

It belongs to the amidase family. GatA subfamily. As to quaternary structure, heterotrimer of A, B and C subunits.

It catalyses the reaction L-glutamyl-tRNA(Gln) + L-glutamine + ATP + H2O = L-glutaminyl-tRNA(Gln) + L-glutamate + ADP + phosphate + H(+). Functionally, allows the formation of correctly charged Gln-tRNA(Gln) through the transamidation of misacylated Glu-tRNA(Gln) in organisms which lack glutaminyl-tRNA synthetase. The reaction takes place in the presence of glutamine and ATP through an activated gamma-phospho-Glu-tRNA(Gln). The sequence is that of Glutamyl-tRNA(Gln) amidotransferase subunit A from Listeria welshimeri serovar 6b (strain ATCC 35897 / DSM 20650 / CCUG 15529 / CIP 8149 / NCTC 11857 / SLCC 5334 / V8).